We begin with the raw amino-acid sequence, 149 residues long: Sperm surface protein Sp17 (149 aa).

The span at 83–96 shows a compositional bias: basic and acidic residues; the sequence is CEQELAKSSGREET. Positions 83–114 are disordered; sequence CEQELAKSSGREETPVTPFEESTEEEREQEEA. Acidic residues predominate over residues 103–113; the sequence is ESTEEEREQEE. An IQ domain is found at 112–141; sequence EEAAALKIQSLFRGHVAREEVKKMKSDKNE.

As to quaternary structure, homodimer. May interact with ROPN1. Testis- and sperm-specific.

It localises to the membrane. Sperm surface zona pellucida binding protein. Helps to bind spermatozoa to the zona pellucida with high affinity. Might function in binding zona pellucida and carbohydrates. The protein is Sperm surface protein Sp17 (Spa17) of Mus musculus (Mouse).